We begin with the raw amino-acid sequence, 183 residues long: D-glycero-alpha-D-manno-heptose-1,7-bisphosphate 7-phosphatase (183 aa).

Positions 93, 95, 108, and 110 each coordinate Zn(2+).

Belongs to the GmhB family.

The protein localises to the cytoplasm. The enzyme catalyses D-glycero-alpha-D-manno-heptose 1,7-bisphosphate + H2O = D-glycero-alpha-D-manno-heptose 1-phosphate + phosphate. The protein operates within nucleotide-sugar biosynthesis; GDP-D-glycero-alpha-D-manno-heptose biosynthesis; GDP-D-glycero-alpha-D-manno-heptose from D-glycero-alpha-D-manno-heptose 7-phosphate: step 2/3. In terms of biological role, converts the D-glycero-alpha-D-manno-heptose 1,7-bisphosphate intermediate into D-glycero-alpha-D-manno-heptose 1-phosphate by removing the phosphate group at the C-7 position. The protein is D-glycero-alpha-D-manno-heptose-1,7-bisphosphate 7-phosphatase (gmhB2) of Photorhabdus laumondii subsp. laumondii (strain DSM 15139 / CIP 105565 / TT01) (Photorhabdus luminescens subsp. laumondii).